A 2936-amino-acid polypeptide reads, in one-letter code: Neurobeachin (2936 aa).

A disordered region spans residues 961 to 985 (ENIKKGKKGNVSTISGLSSQTAGAK). Polar residues predominate over residues 970–982 (NVSTISGLSSQTA). Residues Ser-1001 and Ser-1004 each carry the phosphoserine modification. Polar residues-rich tracts occupy residues 1203-1220 (TSDG…SSTK) and 1231-1241 (TLETESSNSKA). 3 disordered regions span residues 1203-1222 (TSDG…TKGL), 1231-1265 (TLET…ESGK), and 1270-1289 (IQTT…QQDR). Residues 1253 to 1265 (DTERSDDGKESGK) show a composition bias toward basic and acidic residues. Polar residues predominate over residues 1270-1286 (IQTTATTQAVQGRSSTQ). One copy of the WD 1 repeat lies at 1316–1358 (TTMFRIPEFKWSPMHQRLLTDLLFALETDVHVWRSHSTKSVMD). Disordered regions lie at residues 1480–1521 (QRDR…LSPI), 1639–1667 (PDTV…DSGM), 1701–1721 (VKKS…PAPS), and 1830–1850 (TGAV…VNGA). A Phosphoserine modification is found at Ser-1519. Residues 1701 to 1714 (VKKSQESLTEHPSE) show a composition bias toward basic and acidic residues. Ser-1704 and Ser-1707 each carry phosphoserine. The span at 1835-1845 (SGSSSSSSSSS) shows a compositional bias: low complexity. Ser-2128 carries the phosphoserine modification. In terms of domain architecture, BEACH-type PH spans 2137–2245 (NLAGPVVLST…TVKKVVYSLP (109 aa)). Positions 2264-2553 (ATPRQLYKSS…QLLIEPHPPR (290 aa)) constitute a BEACH domain. Residue Ser-2565 is modified to Phosphoserine. WD repeat units lie at residues 2708-2751 (GHWD…HIIG), 2768-2808 (GHDH…RALE), 2850-2889 (EIND…QLYI), and 2892-2931 (GCDA…WHYE).

This sequence belongs to the WD repeat neurobeachin family. Interacts with RII subunit of PKA. As to expression, forebrain, brainstem and cerebellum.

The protein localises to the membrane. Its subcellular location is the endomembrane system. The protein resides in the postsynaptic cell membrane. Binds to type II regulatory subunits of protein kinase A and anchors/targets them to the membrane. May anchor the kinase to cytoskeletal and/or organelle-associated proteins. May have a role in membrane trafficking. The chain is Neurobeachin (Nbea) from Mus musculus (Mouse).